A 404-amino-acid polypeptide reads, in one-letter code: NADH-quinone oxidoreductase subunit D 2 (404 aa).

The protein belongs to the complex I 49 kDa subunit family. NDH-1 is composed of 14 different subunits. Subunits NuoB, C, D, E, F, and G constitute the peripheral sector of the complex.

The protein localises to the cell inner membrane. The enzyme catalyses a quinone + NADH + 5 H(+)(in) = a quinol + NAD(+) + 4 H(+)(out). NDH-1 shuttles electrons from NADH, via FMN and iron-sulfur (Fe-S) centers, to quinones in the respiratory chain. The immediate electron acceptor for the enzyme in this species is believed to be ubiquinone. Couples the redox reaction to proton translocation (for every two electrons transferred, four hydrogen ions are translocated across the cytoplasmic membrane), and thus conserves the redox energy in a proton gradient. This Rhizobium meliloti (strain 1021) (Ensifer meliloti) protein is NADH-quinone oxidoreductase subunit D 2.